Consider the following 183-residue polypeptide: Nucleoplasmin-like protein NO29 (183 aa).

Over residues Ser126–Ile166 the composition is skewed to acidic residues. The disordered stretch occupies residues Ser126–Phe183.

Belongs to the nucleoplasmin family.

It localises to the nucleus. The protein localises to the nucleolus. This chain is Nucleoplasmin-like protein NO29, found in Xenopus laevis (African clawed frog).